Reading from the N-terminus, the 130-residue chain is Ribosome-binding factor A (130 aa).

Belongs to the RbfA family. As to quaternary structure, monomer. Binds 30S ribosomal subunits, but not 50S ribosomal subunits or 70S ribosomes.

The protein localises to the cytoplasm. Its function is as follows. One of several proteins that assist in the late maturation steps of the functional core of the 30S ribosomal subunit. Associates with free 30S ribosomal subunits (but not with 30S subunits that are part of 70S ribosomes or polysomes). Required for efficient processing of 16S rRNA. May interact with the 5'-terminal helix region of 16S rRNA. The polypeptide is Ribosome-binding factor A (Roseiflexus castenholzii (strain DSM 13941 / HLO8)).